The primary structure comprises 69 residues: Brevinin-1CG5 (69 aa).

The N-terminal stretch at 1–22 is a signal peptide; the sequence is MFTLKKSLLLLFFLGTINLSLC. Positions 23–43 are cleaved as a propeptide — removed in mature form; it reads EQERNAEEERRDDDEMDVEVE. A disulfide bridge connects residues Cys-63 and Cys-69.

Belongs to the frog skin active peptide (FSAP) family. Brevinin subfamily. As to expression, expressed by the skin glands.

Its subcellular location is the secreted. In terms of biological role, antimicrobial peptide active against a variety of Gram-positive and Gram-negative bacterial strains. Has antifungal activity against C.albicans ATCC 10231 and a slime mold isolate. Has hemolytic activity against human erythrocytes. The chain is Brevinin-1CG5 from Amolops chunganensis (Chungan torrent frog).